We begin with the raw amino-acid sequence, 239 residues long: Ribose-5-phosphate isomerase A (239 aa).

Substrate contacts are provided by residues 40-43 (SGST), 96-99 (DGAD), and 110-113 (KGGG). Residue Glu119 is the Proton acceptor of the active site. Lys137 provides a ligand contact to substrate.

This sequence belongs to the ribose 5-phosphate isomerase family. In terms of assembly, homodimer.

The catalysed reaction is aldehydo-D-ribose 5-phosphate = D-ribulose 5-phosphate. Its pathway is carbohydrate degradation; pentose phosphate pathway; D-ribose 5-phosphate from D-ribulose 5-phosphate (non-oxidative stage): step 1/1. Its function is as follows. Catalyzes the reversible conversion of ribose-5-phosphate to ribulose 5-phosphate. The chain is Ribose-5-phosphate isomerase A from Methanococcus maripaludis (strain C7 / ATCC BAA-1331).